Here is a 343-residue protein sequence, read N- to C-terminus: MWSHLNRLLFWSIFSSVTCRKAVLDCEAMKTNEFPSPCLDSKTKVVMKGQNVSMFCSHKNKSLQITYSLFRRKTHLGTQDGKGEPAIFNLSITEAHESGPYKCKAQVTSCSKYSRDFSFTIVDPVTSPVLNIMVIQTETDRHITLHCLSVNGSLPINYTFFENHVAISPAISKYDREPAEFNLTKKNPGEEEEYRCEAKNRLPNYATYSHPVTMPSTGGDSCPFCLKLLLPGLLLLLVVIILILAFWVLPKYKTRKAMRNNVPRDRGDTAMEVGIYANILEKQAKEESVPEVGSRPCVSTAQDEAKHSQELQYATPVFQEVAPREQEACDSYKSGYVYSELNF.

Residues 1 to 19 form the signal peptide; the sequence is MWSHLNRLLFWSIFSSVTC. The Extracellular segment spans residues 20 to 227; that stretch reads RKAVLDCEAM…GGDSCPFCLK (208 aa). Ig-like C2-type domains are found at residues 35 to 118 and 128 to 213; these read PSPC…RDFS and PVLN…HPVT. Asparagine 51, asparagine 60, asparagine 89, asparagine 151, asparagine 157, and asparagine 182 each carry an N-linked (GlcNAc...) asparagine glycan. Disulfide bonds link cysteine 56-cysteine 103 and cysteine 147-cysteine 196. The chain crosses the membrane as a helical span at residues 228–248; that stretch reads LLLPGLLLLLVVIILILAFWV. Topologically, residues 249-343 are cytoplasmic; it reads LPKYKTRKAM…SGYVYSELNF (95 aa). 2 consecutive short sequence motifs (ITIM motif) follow at residues 311–316 and 336–341; these read LQYATP and YVYSEL. 2 positions are modified to phosphotyrosine: tyrosine 313 and tyrosine 338.

As to quaternary structure, monomer. Interacts (tyrosine-phosphorylated) with PTPN6, PTPN11 and INPP5D. N-glycosylated. In terms of tissue distribution, expressed in myeloid cells (dendritic cells, macrophages and neutrophils, weak expression on B-cells but not in T-cells or natural killer cells), peripheral blood basophils and mast cells (at protein level).

It is found in the cell membrane. Functionally, immunoglobulin-like receptor which plays an inhibitory role in degranulation of mast cells. Negatively regulates IgE-mediated mast cell activation and suppresses the type I immediate hypersensitivity reaction. This chain is Allergin-1 (MILR1), found in Homo sapiens (Human).